Consider the following 348-residue polypeptide: 3',5'-cyclic-nucleotide phosphodiesterase (348 aa).

Requires Mn(2+) as cofactor.

The enzyme catalyses a nucleoside 3',5'-cyclic phosphate + H2O = a nucleoside 5'-phosphate + H(+). Hydrolyzes cAMP to 5'-AMP and cGMP to 5'-GMP. Does not show phosphohydrolase activity toward various phosphatidylcholine and phosphorylated sugars. This Helicobacter pylori (strain ATCC 700392 / 26695) (Campylobacter pylori) protein is 3',5'-cyclic-nucleotide phosphodiesterase.